The primary structure comprises 121 residues: Large ribosomal subunit protein bL19 (121 aa).

It belongs to the bacterial ribosomal protein bL19 family.

In terms of biological role, this protein is located at the 30S-50S ribosomal subunit interface and may play a role in the structure and function of the aminoacyl-tRNA binding site. The chain is Large ribosomal subunit protein bL19 from Bifidobacterium adolescentis (strain ATCC 15703 / DSM 20083 / NCTC 11814 / E194a).